Consider the following 107-residue polypeptide: Phosphoribosyl-ATP pyrophosphatase (107 aa).

This sequence belongs to the PRA-PH family.

Its subcellular location is the cytoplasm. The enzyme catalyses 1-(5-phospho-beta-D-ribosyl)-ATP + H2O = 1-(5-phospho-beta-D-ribosyl)-5'-AMP + diphosphate + H(+). Its pathway is amino-acid biosynthesis; L-histidine biosynthesis; L-histidine from 5-phospho-alpha-D-ribose 1-diphosphate: step 2/9. The protein is Phosphoribosyl-ATP pyrophosphatase of Methylobacterium radiotolerans (strain ATCC 27329 / DSM 1819 / JCM 2831 / NBRC 15690 / NCIMB 10815 / 0-1).